Consider the following 589-residue polypeptide: GTPase LSG1-2 (589 aa).

Positions 1–26 are disordered; sequence MGKSEKTSLGRSLVKHHNHMIQESKD. A CP-type G domain is found at 158–366; it reads WRQLWRVLER…LCDCPGLVFP (209 aa). The DARXP motif signature appears at 176-180; sequence DARDP. The tract at residues 206-209 is G4; it reads NKAD. A GTP-binding site is contributed by 206 to 209; it reads NKAD. The G5 stretch occupies residues 237–239; it reads AAT. Residues 315-322 form a G1 region; sequence GYPNVGKS. Residue 318–323 participates in GTP binding; that stretch reads NVGKSS. The G2 stretch occupies residues 341–345; sequence GKTKH. Residues 359–362 form a G3 region; it reads DCPG. Gly-362 provides a ligand contact to GTP. Residues 495-509 are compositionally biased toward acidic residues; the sequence is GSESDDSAVGDETEN. 2 disordered regions span residues 495–515 and 534–589; these read GSESDDSAVGDETENEQVPGI and SKKV…LTMR. The short motif at 534 to 541 is the Nuclear localization signal element; that stretch reads SKKVTAKK. The segment covering 534-558 has biased composition (basic residues); sequence SKKVTAKKQTASHKQHKKPQRKKDR. Over residues 580–589 the composition is skewed to polar residues; it reads PANTGPLTMR.

This sequence belongs to the TRAFAC class YlqF/YawG GTPase family. As to expression, ubiquitous, with the highest expression in reproductive and strongly dividing tissues.

The protein resides in the cytoplasm. It is found in the nucleus. In terms of biological role, GTPase involved in ribosome biogenesis. Binds to 23S rRNA and associates with 60S pre-ribosomes. Involved in early cotyledon and leaf development. This chain is GTPase LSG1-2, found in Arabidopsis thaliana (Mouse-ear cress).